The following is a 114-amino-acid chain: Amphinase-4 (114 aa).

His15 (proton acceptor) is an active-site residue. 4 cysteine pairs are disulfide-bonded: Cys26–Cys79, Cys41–Cys85, Cys59–Cys100, and Cys97–Cys114. A glycan (N-linked (GlcNAc...) asparagine) is linked at Asn27. Lys42 to Thr46 contributes to the substrate binding site. N-linked (GlcNAc...) asparagine glycosylation is found at Asn67 and Asn91. His107 functions as the Proton donor in the catalytic mechanism.

This sequence belongs to the pancreatic ribonuclease family. Monomer. There are at least five different forms arising from glycan heterogeneity.

It localises to the secreted. Endonuclease, hydrolyzes highly polymerized RNA, poly(U) and poly(C), and the dinucleotides CpA and UpA. Hydrolyzes rCA, rUA and rUG. Has cytotoxic activity against cultured human submaxillary gland carcinoma cells. The sequence is that of Amphinase-4 from Lithobates pipiens (Northern leopard frog).